The chain runs to 374 residues: Carboxypeptidase O (374 aa).

The signal sequence occupies residues 1 to 20 (MKPLLETLYLLGMLVPGGLG). The 296-residue stretch at 49–344 (IYHPMGEIYE…EAVLSVLDDV (296 aa)) folds into the Peptidase M14 domain. 2 residues coordinate Zn(2+): His108 and Glu111. Residues Asn132, Asn174, and Asn187 are each glycosylated (N-linked (GlcNAc...) asparagine). His236 contributes to the Zn(2+) binding site. Asn251 carries an N-linked (GlcNAc...) asparagine glycan. The active-site Proton donor/acceptor is Glu310. Residue Asp352 is the site of GPI-anchor amidated aspartate attachment. A propeptide spans 353–374 (SAGRVTSATMLLGLLVSCMSLL) (removed in mature form).

This sequence belongs to the peptidase M14 family. It depends on Zn(2+) as a cofactor. Post-translationally, N-glycosylated. Detected in enterocytes of the ileum.

It localises to the apical cell membrane. Strongly inhibited by potato carboxypeptidase inhibitor, and the chelating agents EDTA and 1,10-phenanthroline. Also inhibited by compounds with multiple carboxylic acid groups such as citrate and succinate, and to a lesser exent the amino acids aspartate and glutamate. Not significantly inhibited by benzylsuccinic acid. Carboxypeptidase which preferentially cleaves C-terminal acidic residues from peptides and proteins. Can also cleave C-terminal hydrophobic amino acids, with a preference for small residues over large residues. This Homo sapiens (Human) protein is Carboxypeptidase O.